A 114-amino-acid polypeptide reads, in one-letter code: Gonadotropin subunit beta-1 (114 aa).

An N-terminal signal peptide occupies residues 1 to 19 (MQLVLMAAVLALAEVGCFG). Cystine bridges form between Cys20–Cys66, Cys32–Cys80, Cys37–Cys114, Cys43–Cys92, Cys47–Cys94, and Cys97–Cys104. N-linked (GlcNAc...) asparagine glycosylation is present at Asn24.

The protein belongs to the glycoprotein hormones subunit beta family. Heterodimer of an alpha and a beta chain.

The protein localises to the secreted. Involved in gametogenesis and steroidogenesis. The chain is Gonadotropin subunit beta-1 (cgba) from Fundulus heteroclitus (Killifish).